A 368-amino-acid polypeptide reads, in one-letter code: tRNA-specific 2-thiouridylase MnmA (368 aa).

Residues 12-19 (GMSGGVDS) and Met-38 each bind ATP. Residues 98–100 (NPD) are interaction with target base in tRNA. The Nucleophile role is filled by Cys-103. Cys-103 and Cys-200 are joined by a disulfide. ATP is bound at residue Gly-128. Residues 150-152 (KDQ) are interaction with tRNA. Cys-200 acts as the Cysteine persulfide intermediate in catalysis. The interval 311 to 312 (RY) is interaction with tRNA.

This sequence belongs to the MnmA/TRMU family.

Its subcellular location is the cytoplasm. The catalysed reaction is S-sulfanyl-L-cysteinyl-[protein] + uridine(34) in tRNA + AH2 + ATP = 2-thiouridine(34) in tRNA + L-cysteinyl-[protein] + A + AMP + diphosphate + H(+). Its function is as follows. Catalyzes the 2-thiolation of uridine at the wobble position (U34) of tRNA, leading to the formation of s(2)U34. The chain is tRNA-specific 2-thiouridylase MnmA from Aeromonas salmonicida (strain A449).